Consider the following 364-residue polypeptide: Caffeic acid 3-O-methyltransferase (364 aa).

131–137 (MNQDKVL) lines the substrate pocket. The substrate binding stretch occupies residues 163–181 (AFEYHGTDSRFNRVFNEGM). Residues Gly209, Asp232, Asp252, Met253, and Lys266 each coordinate S-adenosyl-L-methionine. His270 serves as the catalytic Proton acceptor.

Belongs to the class I-like SAM-binding methyltransferase superfamily. Cation-independent O-methyltransferase family. COMT subfamily. In terms of assembly, homodimer. Confined to the vascular tissues of organs undergoing lignification such as stems and roots.

The catalysed reaction is (E)-caffeate + S-adenosyl-L-methionine = (E)-ferulate + S-adenosyl-L-homocysteine + H(+). It carries out the reaction tricetin + 2 S-adenosyl-L-methionine = 3',5'-di-O-methyltricetin + 2 S-adenosyl-L-homocysteine + 2 H(+). The enzyme catalyses luteolin + S-adenosyl-L-methionine = chrysoeriol + S-adenosyl-L-homocysteine + H(+). It catalyses the reaction tricetin + S-adenosyl-L-methionine = 3'-O-methyltricetin + S-adenosyl-L-homocysteine + H(+). The protein operates within aromatic compound metabolism; phenylpropanoid biosynthesis. Catalyzes the conversion of caffeic acid to ferulic acid and of 5-hydroxyferulic acid to sinapic acid. The resulting products may subsequently be converted to the corresponding alcohols that are incorporated into lignins. Can use the flavone tricetin (5,7,3',4',5'-pentahydroxyflavone) as the preferred substrate and give rise to its 3',5'-dimethyl derivative, tricin (3',5'-dimethoxy-5,7,4'-trihydroxyflavone), as the major product, and selgin to a lower extent. Tricin exhibits potential benefits for human health including relaxant effect on smooth muscle of intestinal tissues, antioxidant effect, antihistaminic activity, and growth inhibition of human malignant breast tumor cells and colon cancer cells. Can also use luteolin, quercetin and 5-hydroxyferulic acid (5HF) as substrates. This is Caffeic acid 3-O-methyltransferase from Zea mays (Maize).